The following is a 319-amino-acid chain: R-phycoerythrin gamma chain, chloroplastic (319 aa).

The transit peptide at 1–71 (MDSPAFAVTG…RPKKLASYKR (71 aa)) directs the protein to the chloroplast. Cys96 and Cys135 together coordinate phycourobilin. Cys212 contacts (2R,3E)-phycoerythrobilin. Cys299 contacts phycourobilin.

As to quaternary structure, heteromer of 4 alpha, 4 beta and one gamma chains. In terms of processing, contains four covalently linked bilin chromophores.

The protein localises to the plastid. The protein resides in the chloroplast thylakoid membrane. This Corallina officinalis (Coral seaweed) protein is R-phycoerythrin gamma chain, chloroplastic.